Reading from the N-terminus, the 447-residue chain is Glutamate--tRNA ligase 1 (447 aa).

Positions 10-20 (PSPTGMLHVGN) match the 'HIGH' region motif. The 'KMSKS' region motif lies at 240 to 244 (KISKR). Lys-243 lines the ATP pocket.

It belongs to the class-I aminoacyl-tRNA synthetase family. Glutamate--tRNA ligase type 1 subfamily. As to quaternary structure, monomer.

The protein localises to the cytoplasm. The enzyme catalyses tRNA(Glu) + L-glutamate + ATP = L-glutamyl-tRNA(Glu) + AMP + diphosphate. Its function is as follows. Catalyzes the attachment of glutamate to tRNA(Glu) in a two-step reaction: glutamate is first activated by ATP to form Glu-AMP and then transferred to the acceptor end of tRNA(Glu). The chain is Glutamate--tRNA ligase 1 from Rickettsia rickettsii (strain Sheila Smith).